The primary structure comprises 692 residues: MRPVRMKKLKAVILDEKIDNVVRSLHEEGIVELCDLSEKLEDLEWKTLLSPSSSADYVRNVTSLMIKAGRILDMFSSVSQKETSIKDILNPKPVEKKKVSFNSYQEVIDYAEKVLNEISKEVDGPAERLSELDNKKSKLLQLKEQISYLKGLEFDLKYLGSGEYVFIGAGSVPKEKLGELKAELDKVADGYIGIFSGSEFEKDKKIRVPIVFVTLKEKLENVLSEIRKFEFERYDISDVEGTPSEALSKIESELKAIESERNSLIEKLKALAQKWEKELLAVYELLSIEKARGDAYSQFGKTDRTYYIEAWVPARDAEKAKSLIENSADGFAFVEITEPDEPEEKIPVLLDNPKVIKPFEMLTEMYALPKYNEVDPTLLLVPGFLLFYGIMLTDAVYGLLLTIIGLFIWKKIGKVSEGANKLGYILTLAGISTVIMGIITGGYLGDFTYEFFGFDVTKTPLALVNPLGESYYINNNNPLFTLGSISVTNGPMAILVFSIFVGLIHLLIGLFVGFKENVKRGNMGDAFINQGVWILLILSIFVGIGLMFAGANTMIAGGIIGIFVVLAILASMYKGYKSGGVMEAILGAMDVTGFLGNVLSYARLLALCLATGGLAMAVNIMAKLVGESIPVIGIIVAIIILLVGHTFNFVMNGLGAFIHSLRLHYVEFFSQFYEGGGKKFSPFKANREYTTA.

7 helical membrane-spanning segments follow: residues 389–409 (GIML…LFIW), 422–442 (LGYI…ITGG), 494–514 (ILVF…FVGF), 531–551 (GVWI…FAGA), 553–573 (TMIA…ASMY), 602–622 (ARLL…NIMA), and 624–644 (LVGE…LLVG).

This sequence belongs to the V-ATPase 116 kDa subunit family. As to quaternary structure, the A-type ATPase is composed of subunits A(3), B(3), C, D, E(1 or 2), F, H(2), I and K(x).

The protein resides in the cell membrane. Functionally, component of the A-type ATP synthase that produces ATP from ADP in the presence of a proton gradient across the membrane. In Methanocaldococcus jannaschii (strain ATCC 43067 / DSM 2661 / JAL-1 / JCM 10045 / NBRC 100440) (Methanococcus jannaschii), this protein is A-type ATP synthase subunit I.